The chain runs to 35 residues: NEVCPPGRCEPYCCDPRKCKCLSIDFYGLVCNCDS.

In terms of processing, contains 4 disulfide bonds. As to expression, expressed by the venom duct.

The protein resides in the secreted. The protein is Augerpeptide hheTx5 of Hastula hectica (Sea snail).